A 144-amino-acid polypeptide reads, in one-letter code: MSYMIATPAALTAAATDIDGIGSAVSVANAAAVAATTGVLAAGGDEVLAAIARLFNANAEEYHALSAQVAAFQTLFVRTLTGGCGVFRRRRGRQCVTAAEHRAAGAGRRQRRRRSGDGQWRLRQQRHFGCGGQPEFRQHSEHRR.

The PE domain maps to 1–87 (MSYMIATPAA…RTLTGGCGVF (87 aa)). The interval 98 to 124 (AAEHRAAGAGRRQRRRRSGDGQWRLRQ) is disordered.

The protein belongs to the mycobacterial PE family. As to quaternary structure, forms a complex with PE10. The complex interacts with human TLR4.

Its subcellular location is the secreted. The protein resides in the cell wall. It is found in the cell surface. In terms of biological role, together with PE10, induces macrophage apoptosis through human Toll-like receptor 4 (TLR4) signaling pathway. Interaction with TLR4 leads to increased levels of phospho-IRF-3, increase in the transcript levels of IFN-beta and pro-apoptotic genes, up-regulation of IL-10, down-regulation of IL-1b and enhanced levels of macrophage apoptosis. In Mycobacterium tuberculosis (strain ATCC 25618 / H37Rv), this protein is PE family protein PE9.